The following is a 103-amino-acid chain: Large ribosomal subunit protein uL24 (103 aa).

The protein belongs to the universal ribosomal protein uL24 family. In terms of assembly, part of the 50S ribosomal subunit.

One of two assembly initiator proteins, it binds directly to the 5'-end of the 23S rRNA, where it nucleates assembly of the 50S subunit. In terms of biological role, one of the proteins that surrounds the polypeptide exit tunnel on the outside of the subunit. This chain is Large ribosomal subunit protein uL24, found in Bacillus cytotoxicus (strain DSM 22905 / CIP 110041 / 391-98 / NVH 391-98).